We begin with the raw amino-acid sequence, 372 residues long: Ligninase A (372 aa).

The N-terminal stretch at 1-21 is a signal peptide; it reads MAFKQLVAAISLALSLTTANA. The propeptide occupies 22–28; the sequence is AVVKEKR. 4 cysteine pairs are disulfide-bonded: cysteine 31–cysteine 43, cysteine 42–cysteine 313, cysteine 62–cysteine 148, and cysteine 277–cysteine 345. Residue histidine 75 is the Proton acceptor of the active site. 4 residues coordinate Ca(2+): aspartate 76, glycine 94, aspartate 96, and serine 98. Heme b is bound at residue histidine 204. Serine 205, aspartate 222, threonine 224, isoleucine 227, and aspartate 229 together coordinate Ca(2+). N-linked (GlcNAc...) asparagine glycosylation is present at asparagine 285.

It belongs to the peroxidase family. Ligninase subfamily. Heme b serves as cofactor. It depends on Ca(2+) as a cofactor.

The enzyme catalyses 1-(3,4-dimethoxyphenyl)-2-(2-methoxyphenoxy)propane-1,3-diol + H2O2 = 3,4-dimethoxybenzaldehyde + guaiacol + glycolaldehyde + H2O. It catalyses the reaction 2 (3,4-dimethoxyphenyl)methanol + H2O2 = 2 (3,4-dimethoxyphenyl)methanol radical + 2 H2O. It functions in the pathway secondary metabolite metabolism; lignin degradation. Its function is as follows. Depolymerization of lignin. Catalyzes the C(alpha)-C(beta) cleavage of the propyl side chains of lignin. This is Ligninase A (LIPA) from Phanerodontia chrysosporium (White-rot fungus).